A 141-amino-acid polypeptide reads, in one-letter code: Hemoglobin subunit alpha (141 aa).

Positions 1–141 constitute a Globin domain; it reads VLSPADKTNV…VSTVLTSKYR (141 aa). Serine 3 carries the phosphoserine modification. Lysine 7 is subject to N6-succinyllysine. Threonine 8 bears the Phosphothreonine mark. Position 11 is an N6-succinyllysine (lysine 11). Position 16 is an N6-acetyllysine; alternate (lysine 16). N6-succinyllysine; alternate is present on lysine 16. The residue at position 24 (tyrosine 24) is a Phosphotyrosine. The residue at position 35 (serine 35) is a Phosphoserine. Lysine 40 is subject to N6-succinyllysine. At serine 49 the chain carries Phosphoserine. Histidine 58 is a binding site for O2. Residue histidine 87 participates in heme b binding. At serine 102 the chain carries Phosphoserine. The residue at position 108 (threonine 108) is a Phosphothreonine. Serine 124 and serine 131 each carry phosphoserine. A phosphothreonine mark is found at threonine 134 and threonine 137. At serine 138 the chain carries Phosphoserine.

This sequence belongs to the globin family. In terms of assembly, heterotetramer of two alpha chains and two beta chains. Red blood cells.

Functionally, involved in oxygen transport from the lung to the various peripheral tissues. This is Hemoglobin subunit alpha from Otospermophilus beecheyi (California ground squirrel).